Consider the following 112-residue polypeptide: MKKRFISVCAIAIALFVSLTPAALAADLANGAKVFSGNCAACHMGGGNVVMANKTLKKEALEQFGMYSEDAIIYQVQHGKNAMPAFAGRLTDEQIQDVAAYVLDQAAKGWAG.

The signal sequence occupies residues 1 to 25 (MKKRFISVCAIAIALFVSLTPAALA). Residues C39, C42, H43, and M83 each coordinate heme c.

Belongs to the cytochrome c family. PetJ subfamily. As to quaternary structure, monomer. In terms of processing, binds 1 heme c group covalently per subunit.

It localises to the cellular thylakoid lumen. Functions as an electron carrier between membrane-bound cytochrome b6-f and photosystem I in oxygenic photosynthesis. The chain is Cytochrome c6 (petJ) from Thermostichus vulcanus (Synechococcus vulcanus).